The sequence spans 417 residues: Origin of replication complex subunit 4 (417 aa).

59–66 (GPRGSGKA) provides a ligand contact to ATP.

This sequence belongs to the ORC4 family. Component of the origin recognition complex (ORC) composed of at least ORC1 (ORC1A or ORC1B), ORC2, ORC3, ORC4, ORC5 and ORC6. ORC is regulated in a cell-cycle and development dependent manner. It is sequentially assembled at the exit from anaphase of mitosis and disassembled as cells enter S phase. Interacts directly with ORC1A, ORC2, ORC3, ORC5 and ORC6. Follow a cell-cycle regulation with a peak at the G1/S-phase. Isoform AtORC4a is expressed at low levels ubiquitously. Isoform AtORC4b is mostly expressed in siliques, flowers and flower buds, and, to a lower exent, in roots, leaves and stems.

It is found in the nucleus. Its function is as follows. Component of the origin recognition complex (ORC) that binds origins of replication. DNA-binding is ATP-dependent. The specific DNA sequences that define origins of replication have not been identified yet. ORC is required to assemble the pre-replication complex necessary to initiate DNA replication. This is Origin of replication complex subunit 4 from Arabidopsis thaliana (Mouse-ear cress).